The sequence spans 391 residues: GTPase Obg (391 aa).

In terms of domain architecture, Obg spans 1-159; that stretch reads MKFIDEALIR…RDLQLELMLL (159 aa). Positions 160-333 constitute an OBG-type G domain; sequence ADVGMLGLPN…LTRDIMDFIE (174 aa). Residues 166 to 173, 191 to 195, 213 to 216, 283 to 286, and 314 to 316 contribute to the GTP site; these read GLPNAGKS, FTTLV, DIPG, NKID, and SAA. Residues Ser173 and Thr193 each coordinate Mg(2+). The segment at 361–391 is disordered; the sequence is QNPITEDDWDDLDDDGWTEEDDEGVEFIYKP. Positions 365-385 are enriched in acidic residues; sequence TEDDWDDLDDDGWTEEDDEGV.

It belongs to the TRAFAC class OBG-HflX-like GTPase superfamily. OBG GTPase family. Monomer. Mg(2+) is required as a cofactor.

Its subcellular location is the cytoplasm. Its function is as follows. An essential GTPase which binds GTP, GDP and possibly (p)ppGpp with moderate affinity, with high nucleotide exchange rates and a fairly low GTP hydrolysis rate. Plays a role in control of the cell cycle, stress response, ribosome biogenesis and in those bacteria that undergo differentiation, in morphogenesis control. The polypeptide is GTPase Obg (Glaesserella parasuis serovar 5 (strain SH0165) (Haemophilus parasuis)).